The primary structure comprises 400 residues: MSESVRTNTSIWSKGMLSVIVAQFLSAFGDNALLFATLALLKAQFYPDWSQPVLQMVFVGAYILFAPFVGQIADSFAKGRVMMVANGLKLAGAAGICLGVNPFVGYTLVGIGAAAYSPAKYGILGELTTGDKLVKANGLMEASTIAAILLGSVAGGVLADWHVIAALVACALAYAGAVAANLFIPKLVAARPGQSWRLSAMTRSFFCACVVLWRNGETRFSLVGTGLFWGAGVTLRFLLVLWVPVALGITDNATPTYLNAMVAVGIVVGAGAAAKLVTLETVSRCMPAGILIGVVVAIFSLQHALLPAYALLLLIGMLGGFFVVPLNALLQERGKKSVGAGNAIAVQNLGENSAMLLMLGLYSLAVLVGVPAVAIGIGFGVLFALAIAALWIWQRRQASY.

The next 12 helical transmembrane spans lie at 19–39, 53–73, 91–111, 139–159, 164–184, 195–213, 227–247, 257–277, 281–301, 304–324, 352–372, and 373–393; these read VIVAQFLSAFGDNALLFATLA, VLQMVFVGAYILFAPFVGQIA, AGAAGICLGVNPFVGYTLVGI, LMEASTIAAILLGSVAGGVLA, IAALVACALAYAGAVAANLFI, SWRLSAMTRSFFCACVVLW, LFWGAGVTLRFLLVLWVPVAL, YLNAMVAVGIVVGAGAAAKLV, TVSRCMPAGILIGVVVAIFSL, ALLPAYALLLLIGMLGGFFVV, NSAMLLMLGLYSLAVLVGVPA, and VAIGIGFGVLFALAIAALWIW.

It belongs to the major facilitator superfamily. LplT (TC 2.A.1.42) family.

It is found in the cell inner membrane. Functionally, catalyzes the facilitated diffusion of 2-acyl-glycero-3-phosphoethanolamine (2-acyl-GPE) into the cell. This chain is Lysophospholipid transporter LplT, found in Salmonella typhi.